A 395-amino-acid chain; its full sequence is NAD(P)H-quinone oxidoreductase subunit H (395 aa).

It belongs to the complex I 49 kDa subunit family. As to quaternary structure, NDH-1 can be composed of about 15 different subunits; different subcomplexes with different compositions have been identified which probably have different functions.

The protein localises to the cellular thylakoid membrane. The enzyme catalyses a plastoquinone + NADH + (n+1) H(+)(in) = a plastoquinol + NAD(+) + n H(+)(out). It catalyses the reaction a plastoquinone + NADPH + (n+1) H(+)(in) = a plastoquinol + NADP(+) + n H(+)(out). In terms of biological role, NDH-1 shuttles electrons from an unknown electron donor, via FMN and iron-sulfur (Fe-S) centers, to quinones in the respiratory and/or the photosynthetic chain. The immediate electron acceptor for the enzyme in this species is believed to be plastoquinone. Couples the redox reaction to proton translocation, and thus conserves the redox energy in a proton gradient. Cyanobacterial NDH-1 also plays a role in inorganic carbon-concentration. The chain is NAD(P)H-quinone oxidoreductase subunit H from Prochlorococcus marinus (strain MIT 9312).